The following is an 89-amino-acid chain: Large ribosomal subunit protein bL27 (89 aa).

The segment at 1-20 (MAHKKAGGSSRNGRDSAGRR) is disordered.

This sequence belongs to the bacterial ribosomal protein bL27 family.

The polypeptide is Large ribosomal subunit protein bL27 (Jannaschia sp. (strain CCS1)).